A 250-amino-acid polypeptide reads, in one-letter code: MKKLIIANWKMFKTLNDIKTFKEEFDKNIKNVKVNADYSVGVPSIYLNQAKEILKGIKVIAQDAHFKNEGAYTGNISWSQLKDCGIDGSIIGHSERRQMFNETDETVNLKTISLVENNMQAVVCVGETLEEYEANKSFDVVWNQTKKALANVSEAQLKNVVIAYEPVWAIGTGKVPTGKEVDDLIQKVRDELSKLYSKQAVESLVVLYGGSVNDKNAEEFFKQKNINGALVGSFCLKAENFVKLIELGGN.

8-10 (NWK) contacts substrate. The Electrophile role is filled by His-93. The active-site Proton acceptor is Glu-165. The substrate site is built by Gly-171 and Ser-211.

Belongs to the triosephosphate isomerase family. As to quaternary structure, homodimer.

The protein resides in the cytoplasm. The enzyme catalyses D-glyceraldehyde 3-phosphate = dihydroxyacetone phosphate. Its pathway is carbohydrate biosynthesis; gluconeogenesis. The protein operates within carbohydrate degradation; glycolysis; D-glyceraldehyde 3-phosphate from glycerone phosphate: step 1/1. In terms of biological role, involved in the gluconeogenesis. Catalyzes stereospecifically the conversion of dihydroxyacetone phosphate (DHAP) to D-glyceraldehyde-3-phosphate (G3P). This Malacoplasma penetrans (strain HF-2) (Mycoplasma penetrans) protein is Triosephosphate isomerase.